We begin with the raw amino-acid sequence, 340 residues long: Lipoate--protein ligase 2 (340 aa).

A BPL/LPL catalytic domain is found at 31 to 222 (FLDEDILFPY…QILGIDDIKE (192 aa)). ATP contacts are provided by residues R73, 78 to 81 (GAVY), K136, and A140. K136 contacts (R)-lipoate. Positions 293-321 (QGDIKDVEEALQGTKMTREDLMHQLKQLD) form a coiled coil.

The protein belongs to the LplA family.

It carries out the reaction L-lysyl-[lipoyl-carrier protein] + (R)-lipoate + ATP = N(6)-[(R)-lipoyl]-L-lysyl-[lipoyl-carrier protein] + AMP + diphosphate + H(+). Its pathway is protein modification; protein lipoylation via exogenous pathway; protein N(6)-(lipoyl)lysine from lipoate: step 1/2. It participates in protein modification; protein lipoylation via exogenous pathway; protein N(6)-(lipoyl)lysine from lipoate: step 2/2. Its function is as follows. Catalyzes specifically the lipoylation of GcvH-L (SAV0324), likely via the ATP-dependent activation of lipoate to lipoyl-AMP and the transfer of the activated lipoyl onto the lipoyl domain of the target protein. Can also utilize lipoamide as substrate for GcvH-L modification. This is Lipoate--protein ligase 2 from Staphylococcus aureus (strain Mu50 / ATCC 700699).